Reading from the N-terminus, the 467-residue chain is Mothers against decapentaplegic homolog 2 (467 aa).

S2 carries the post-translational modification N-acetylserine. T8 is subject to Phosphothreonine. The MH1 domain maps to 10–176 (PVVKRLLGWK…YQRVETPVLP (167 aa)). Residue K19 is modified to N6-acetyllysine. Residues C74, C149, C161, and H166 each contribute to the Zn(2+) site. The segment covering 207–217 (PAGIEPQSNYI) has biased composition (polar residues). The interval 207–251 (PAGIEPQSNYIPETPPPGYISEDGETSDQQLNQSMDTGSPAELSP) is disordered. Residue T220 is modified to Phosphothreonine. Positions 221-225 (PPPGY) match the PY-motif motif. Positions 233–243 (SDQQLNQSMDT) are enriched in polar residues. Residue S240 is modified to Phosphoserine; by CAMK2. S245, S250, S255, S458, S460, and S464 each carry phosphoserine. One can recognise an MH2 domain in the interval 274-467 (WCSIAYYELN…SPSVRCSSMS (194 aa)). A phosphoserine; by TGFBR1 mark is found at S465 and S467.

Belongs to the dwarfin/SMAD family. Monomer; in the absence of TGF-beta. Heterodimer; in the presence of TGF-beta. Forms a heterodimer with co-SMAD, SMAD4, in the nucleus to form the transactivation complex SMAD2/SMAD4. Found in a complex with SMAD3 and TRIM33 upon addition of TGF-beta. Identified in a complex that contains at least ZNF451, SMAD2, SMAD3 and SMAD4. Interacts (via the MH2 domain) with ZFYVE9; may form trimers with the SMAD4 co-SMAD. Interacts with TAZ/WWRT1. Interacts with FOXH1. Interacts with SNW1. Interacts with CREB-binding protein (CBP) and EP300. Interacts with SNON. Interacts with ALK4/ACVR1B. Interacts with SKOR1. Interacts with SKOR2. Interacts with PRDM16. Interacts (via MH2 domain) with LEMD3. Interacts with RBPMS. Interacts with WWP1. Interacts (dephosphorylated form, via the MH1 and MH2 domains) with RANBP3 (via its C-terminal R domain); the interaction results in the export of dephosphorylated SMAD3 out of the nucleus and termination of the TGF-beta signaling. Interacts with PDPK1 (via PH domain). Interacts with DAB2; the interactions are enhanced upon TGF-beta stimulation. Interacts with USP15. Interacts with PPP5C. Interacts with LDLRAD4 (via the SMAD interaction motif). Interacts (via MH2 domain) with PMEPA1 (via the SMAD interaction motif). Interacts with ZFHX3. Interacts with ZNF451. Interacts with SMURF2 when phosphorylated on Ser-465/467. Interacts with PPM1A. Interacts with TGF-beta. Interacts with TGFBR1. Interacts with TGIF. Interacts with SMAD3 and TRIM33. Interacts with ZNF580. Interacts with NEDD4L in response to TGF-beta. Interacts with HGS. Interacts with AIP1. Interacts with WWP1. Interacts with PML. Interacts weakly with ZNF8. Interacts (when phosphorylated) with RNF111; RNF111 acts as an enhancer of the transcriptional responses by mediating ubiquitination and degradation of SMAD2 inhibitors. Interacts with YAP1 (when phosphorylated at 'Ser-55'). Interacts when phosphorylated with IPO7; the interaction facilitates translocation of SMAD2 to the nucleus. Interacts with MTMR4; negatively regulates TGF-beta signaling through SMAD2 dephosphorylation and retention in endosomes. In response to TGF-beta, phosphorylated on the C-terminal SXS motif by TGF-beta and activin type 1 receptor kinases, phosphorylation declines progressively in a KMT5A-dependent manner. Phosphorylation in this motif is required for interaction with a number of proteins including SMURF2, SNON and SMAD4 in response to TGF-beta. Dephosphorylated in this motif by PPM1A leading to disruption of the SMAD2/3-SMAD4 complex, nuclear export and termination of the TGF-beta signaling. In response to decorin, the naturally occurring inhibitor of TGF-beta signaling, phosphorylated on Ser-240 by CaMK2. Phosphorylated by MAPK3 upon EGF stimulation; which increases transcriptional activity and stability, and is blocked by calmodulin. Phosphorylated by PDPK1. In terms of processing, acetylated on Lys-19 by coactivators in response to TGF-beta signaling, which increases transcriptional activity. Post-translationally, in response to TGF-beta, ubiquitinated by NEDD4L; which promotes its degradation. Monoubiquitinated, leading to prevent DNA-binding. Deubiquitination by USP15 alleviates inhibition and promotes activation of TGF-beta target genes. Ubiquitinated by RNF111, leading to its degradation: only SMAD2 proteins that are 'in use' are targeted by RNF111, RNF111 playing a key role in activating SMAD2 and regulating its turnover.

It localises to the cytoplasm. Its subcellular location is the nucleus. In terms of biological role, receptor-regulated SMAD (R-SMAD) that is an intracellular signal transducer and transcriptional modulator activated by TGF-beta (transforming growth factor) and activin type 1 receptor kinases. Binds the TRE element in the promoter region of many genes that are regulated by TGF-beta and, on formation of the SMAD2/SMAD4 complex, activates transcription. Promotes TGFB1-mediated transcription of odontoblastic differentiation genes in dental papilla cells. Positively regulates PDPK1 kinase activity by stimulating its dissociation from the 14-3-3 protein YWHAQ which acts as a negative regulator. The sequence is that of Mothers against decapentaplegic homolog 2 (SMAD2) from Pongo abelii (Sumatran orangutan).